A 141-amino-acid chain; its full sequence is Hemoglobin subunit alpha-A (141 aa).

The Globin domain maps to 1–141; sequence VLSGPDKTNV…VGAVLTAKYR (141 aa). H58 contacts O2. Residue H87 coordinates heme b.

It belongs to the globin family. In terms of assembly, heterotetramer of two alpha chains and two beta chains. Red blood cells.

Its function is as follows. Involved in oxygen transport from the lung to the various peripheral tissues. This chain is Hemoglobin subunit alpha-A (HBAA), found in Rhea americana (Greater rhea).